Consider the following 409-residue polypeptide: Histidinol dehydrogenase homolog (409 aa).

Belongs to the histidinol dehydrogenase family.

This is Histidinol dehydrogenase homolog from Synechocystis sp. (strain ATCC 27184 / PCC 6803 / Kazusa).